A 430-amino-acid polypeptide reads, in one-letter code: Sesquiterpene synthase Agr5 (430 aa).

The first 25 residues, 1 to 25 (MASSLLEPSLAAIALVILLASVSLS), serve as a signal peptide directing secretion. Asparagine 113 is a glycosylation site (N-linked (GlcNAc...) asparagine). Mg(2+)-binding residues include aspartate 176, asparagine 311, serine 315, and glutamate 319. Positions 176 to 180 (DEYTD) match the DDXXD motif motif. (2E,6E)-farnesyl diphosphate contacts are provided by arginine 401 and tyrosine 402.

The protein belongs to the terpene synthase family. Mg(2+) serves as cofactor.

It carries out the reaction (2E,6E)-farnesyl diphosphate = viridiflorene + diphosphate. In terms of biological role, terpene cyclase that catalyzes the cyclization of farnesyl diphosphate (FPP) to viridiflorene and viridiflorol. In Cyclocybe aegerita (Black poplar mushroom), this protein is Sesquiterpene synthase Agr5.